The chain runs to 24 residues: Brevinin-1SY (24 aa).

C18 and C24 are oxidised to a cystine.

Expressed by the skin glands.

The protein localises to the secreted. Functionally, antibacterial activity against Gram-positive bacterium S.aureus and Gram-negative bacterium E.coli. This is Brevinin-1SY from Lithobates sylvaticus (Wood frog).